The chain runs to 146 residues: Large ribosomal subunit protein uL15 (146 aa).

The segment at 1-65 is disordered; it reads MSDIQLNTLK…GQMPLQRRLP (65 aa). The segment covering 24–34 has biased composition (gly residues); the sequence is RGIGSGLGKTA.

It belongs to the universal ribosomal protein uL15 family. In terms of assembly, part of the 50S ribosomal subunit.

Its function is as follows. Binds to the 23S rRNA. The sequence is that of Large ribosomal subunit protein uL15 from Bordetella petrii (strain ATCC BAA-461 / DSM 12804 / CCUG 43448).